A 302-amino-acid chain; its full sequence is Pyridoxal 5'-phosphate synthase subunit PdxS (302 aa).

Residue Asp32 participates in D-ribose 5-phosphate binding. Lys89 functions as the Schiff-base intermediate with D-ribose 5-phosphate in the catalytic mechanism. Position 161 (Gly161) interacts with D-ribose 5-phosphate. Residue Arg173 coordinates D-glyceraldehyde 3-phosphate. Residues Gly222 and 243 to 244 each bind D-ribose 5-phosphate; that span reads GS. The interval 276–302 is disordered; that stretch reads ASNIGEGMQGDPNADLPEDERMQDRGN.

Belongs to the PdxS/SNZ family. In the presence of PdxT, forms a dodecamer of heterodimers.

The enzyme catalyses aldehydo-D-ribose 5-phosphate + D-glyceraldehyde 3-phosphate + L-glutamine = pyridoxal 5'-phosphate + L-glutamate + phosphate + 3 H2O + H(+). The protein operates within cofactor biosynthesis; pyridoxal 5'-phosphate biosynthesis. In terms of biological role, catalyzes the formation of pyridoxal 5'-phosphate from ribose 5-phosphate (RBP), glyceraldehyde 3-phosphate (G3P) and ammonia. The ammonia is provided by the PdxT subunit. Can also use ribulose 5-phosphate and dihydroxyacetone phosphate as substrates, resulting from enzyme-catalyzed isomerization of RBP and G3P, respectively. This is Pyridoxal 5'-phosphate synthase subunit PdxS from Halobacterium salinarum (strain ATCC 29341 / DSM 671 / R1).